We begin with the raw amino-acid sequence, 425 residues long: Pleckstrin homology domain-containing family A member 2 (425 aa).

Positions 7–113 (QNRICGFLDI…WVEALNQASK (107 aa)) constitute a PH 1 domain. Lys141 is covalently cross-linked (Glycyl lysine isopeptide (Lys-Gly) (interchain with G-Cter in SUMO2)). Ser184 is subject to Phosphoserine. In terms of domain architecture, PH 2 spans 198–298 (PLIKSGYCVK…WIKEIGAAVQ (101 aa)). Phosphoserine is present on residues Ser314 and Ser349. Positions 374–410 (AEDSLFTPRLGESSTSAVLPSSRIRHRSEPQHPKEKP) are disordered. Over residues 400 to 410 (RSEPQHPKEKP) the composition is skewed to basic and acidic residues.

As to quaternary structure, binds MPDZ and PTPN13.

It localises to the cytoplasm. The protein localises to the cell membrane. Its subcellular location is the nucleus. Binds specifically to phosphatidylinositol 3,4-diphosphate (PtdIns3,4P2), but not to other phosphoinositides. May recruit other proteins to the plasma membrane. The protein is Pleckstrin homology domain-containing family A member 2 (PLEKHA2) of Bos taurus (Bovine).